Here is a 365-residue protein sequence, read N- to C-terminus: Peptide chain release factor 2 (365 aa).

At Gln-252 the chain carries N5-methylglutamine.

It belongs to the prokaryotic/mitochondrial release factor family. Methylated by PrmC. Methylation increases the termination efficiency of RF2.

Its subcellular location is the cytoplasm. Its function is as follows. Peptide chain release factor 2 directs the termination of translation in response to the peptide chain termination codons UGA and UAA. This is Peptide chain release factor 2 from Shewanella baltica (strain OS223).